The primary structure comprises 232 residues: Ethylene-responsive transcription factor ERF025 (232 aa).

Residues Met1 to Gln29 are compositionally biased toward polar residues. Residues Met1–Ser63 are disordered. The span at Ser30–Pro50 shows a compositional bias: low complexity. Positions Ile64–Pro120 form a DNA-binding region, AP2/ERF. The tract at residues Pro213–Lys232 is disordered.

Belongs to the AP2/ERF transcription factor family. ERF subfamily.

It is found in the nucleus. Functionally, probably acts as a transcriptional activator. Binds to the GCC-box pathogenesis-related promoter element. May be involved in the regulation of gene expression by stress factors and by components of stress signal transduction pathways. The polypeptide is Ethylene-responsive transcription factor ERF025 (ERF025) (Arabidopsis thaliana (Mouse-ear cress)).